Consider the following 86-residue polypeptide: Large ribosomal subunit protein bL27 (86 aa).

The segment at Met1–Val23 is disordered.

Belongs to the bacterial ribosomal protein bL27 family.

The chain is Large ribosomal subunit protein bL27 from Alkalilimnicola ehrlichii (strain ATCC BAA-1101 / DSM 17681 / MLHE-1).